A 2376-amino-acid chain; its full sequence is Cell morphogenesis protein PAG1 (2376 aa).

The interval Met-1 to Asn-30 is disordered. A Phosphoserine modification is found at Ser-141. The segment at Ser-275 to Gly-294 is disordered. Phosphoserine is present on Ser-1144. Thr-2264 is subject to Phosphothreonine. Ser-2267 and Ser-2355 each carry phosphoserine.

The protein to S.pombe mor2. As to quaternary structure, associates with CBK1.

Seems to play a role in cell morphogenesis. This Saccharomyces cerevisiae (strain ATCC 204508 / S288c) (Baker's yeast) protein is Cell morphogenesis protein PAG1 (TAO3).